Consider the following 582-residue polypeptide: Probable DNA ligase (582 aa).

Glutamate 243 contacts ATP. The active-site N6-AMP-lysine intermediate is lysine 245. 6 residues coordinate ATP: arginine 250, arginine 265, glutamate 295, phenylalanine 335, arginine 410, and lysine 416.

It belongs to the ATP-dependent DNA ligase family. Mg(2+) serves as cofactor.

It carries out the reaction ATP + (deoxyribonucleotide)n-3'-hydroxyl + 5'-phospho-(deoxyribonucleotide)m = (deoxyribonucleotide)n+m + AMP + diphosphate.. Functionally, DNA ligase that seals nicks in double-stranded DNA during DNA replication, DNA recombination and DNA repair. The protein is Probable DNA ligase of Dictyoglomus turgidum (strain DSM 6724 / Z-1310).